A 172-amino-acid chain; its full sequence is MRNLILVGPMGAGKSTIGRLLAKELRLLFKDSDKEIELRCGANIPWIFDKEGEPGFRDREQAMIAELCALDGVVLATGGGAVMREANRQALHQGGRVIYLHASVEQQVGRTARDRNRPLLRTANPEATLRTLLETRDPLYREIADLVVETDERPPRMVVIDILERLQQLPPR.

Position 11–16 (11–16) interacts with ATP; that stretch reads GAGKST. S15 contributes to the Mg(2+) binding site. D33, R57, and G79 together coordinate substrate. Residue R117 participates in ATP binding. R136 serves as a coordination point for substrate. R153 provides a ligand contact to ATP.

Belongs to the shikimate kinase family. In terms of assembly, monomer. Mg(2+) serves as cofactor.

It localises to the cytoplasm. It catalyses the reaction shikimate + ATP = 3-phosphoshikimate + ADP + H(+). It functions in the pathway metabolic intermediate biosynthesis; chorismate biosynthesis; chorismate from D-erythrose 4-phosphate and phosphoenolpyruvate: step 5/7. Its function is as follows. Catalyzes the specific phosphorylation of the 3-hydroxyl group of shikimic acid using ATP as a cosubstrate. The polypeptide is Shikimate kinase (Pseudomonas putida (strain ATCC 700007 / DSM 6899 / JCM 31910 / BCRC 17059 / LMG 24140 / F1)).